Consider the following 335-residue polypeptide: N-acetylglucosaminyl-phosphatidylinositol de-N-acetylase (335 aa).

Residues 3 to 23 (SAFTFLSLAIFPLALFIFWTL) traverse the membrane as a helical segment. N128 and N153 each carry an N-linked (GlcNAc...) asparagine glycan.

This sequence belongs to the PIGL family.

It localises to the endoplasmic reticulum membrane. It catalyses the reaction a 6-(N-acetyl-alpha-D-glucosaminyl)-1-(1,2-diacyl-sn-glycero-3-phospho)-1D-myo-inositol + H2O = a 6-(alpha-D-glucosaminyl)-1-(1,2-diacyl-sn-glycero-3-phospho)-1D-myo-inositol + acetate. The protein operates within glycolipid biosynthesis; glycosylphosphatidylinositol-anchor biosynthesis. Involved in the second step of GPI biosynthesis. De-N-acetylation of N-acetylglucosaminyl-phosphatidylinositol. The protein is N-acetylglucosaminyl-phosphatidylinositol de-N-acetylase of Arthroderma benhamiae (strain ATCC MYA-4681 / CBS 112371) (Trichophyton mentagrophytes).